A 392-amino-acid polypeptide reads, in one-letter code: Dual-specificity RNA methyltransferase RlmN (392 aa).

Glu115 acts as the Proton acceptor in catalysis. The Radical SAM core domain occupies 121–358; it reads EVDRGTLCIS…YKAGYASPIR (238 aa). Residues Cys128 and Cys369 are joined by a disulfide bond. [4Fe-4S] cluster contacts are provided by Cys135, Cys139, and Cys142. S-adenosyl-L-methionine-binding positions include 195 to 196, Ser227, 249 to 251, and Asn326; these read GE and SFH. Residue Cys369 is the S-methylcysteine intermediate of the active site.

Belongs to the radical SAM superfamily. RlmN family. Requires [4Fe-4S] cluster as cofactor.

It is found in the cytoplasm. It catalyses the reaction adenosine(2503) in 23S rRNA + 2 reduced [2Fe-2S]-[ferredoxin] + 2 S-adenosyl-L-methionine = 2-methyladenosine(2503) in 23S rRNA + 5'-deoxyadenosine + L-methionine + 2 oxidized [2Fe-2S]-[ferredoxin] + S-adenosyl-L-homocysteine. It carries out the reaction adenosine(37) in tRNA + 2 reduced [2Fe-2S]-[ferredoxin] + 2 S-adenosyl-L-methionine = 2-methyladenosine(37) in tRNA + 5'-deoxyadenosine + L-methionine + 2 oxidized [2Fe-2S]-[ferredoxin] + S-adenosyl-L-homocysteine. In terms of biological role, specifically methylates position 2 of adenine 2503 in 23S rRNA and position 2 of adenine 37 in tRNAs. m2A2503 modification seems to play a crucial role in the proofreading step occurring at the peptidyl transferase center and thus would serve to optimize ribosomal fidelity. In Jannaschia sp. (strain CCS1), this protein is Dual-specificity RNA methyltransferase RlmN.